A 229-amino-acid polypeptide reads, in one-letter code: 2,3-bisphosphoglycerate-dependent phosphoglycerate mutase (229 aa).

Residues 8 to 15, 21 to 22, Arg60, 87 to 90, Lys98, 114 to 115, and 183 to 184 contribute to the substrate site; these read RHGESAWN, TG, ERHY, RR, and GN. His9 serves as the catalytic Tele-phosphohistidine intermediate. The Proton donor/acceptor role is filled by Glu87.

The protein belongs to the phosphoglycerate mutase family. BPG-dependent PGAM subfamily. In terms of assembly, homodimer.

The catalysed reaction is (2R)-2-phosphoglycerate = (2R)-3-phosphoglycerate. The protein operates within carbohydrate degradation; glycolysis; pyruvate from D-glyceraldehyde 3-phosphate: step 3/5. In terms of biological role, catalyzes the interconversion of 2-phosphoglycerate and 3-phosphoglycerate. The polypeptide is 2,3-bisphosphoglycerate-dependent phosphoglycerate mutase (Polynucleobacter necessarius subsp. necessarius (strain STIR1)).